The sequence spans 174 residues: Guided entry of tail-anchored proteins factor 1 (174 aa).

Residues 1-8 lie on the Lumenal side of the membrane; the sequence is MSASETDR. Residues 9 to 29 form a helical membrane-spanning segment; that stretch reads WAWLLVLSFVFGCNLLRILLP. Over 30-99 the chain is Cytoplasmic; that stretch reads SLSSFISRVL…VKARTAQLAK (70 aa). Residues 39-94 are a coiled coil; sequence LQKDAEQESQMRAEIQGMKQELSTVNMMDEFARYARLERKINKMTDKLKTHVKART. An interaction with GET3/TRC40 region spans residues 39 to 97; sequence LQKDAEQESQMRAEIQGMKQELSTVNMMDEFARYARLERKINKMTDKLKTHVKARTAQL. Residues 100–120 form a helical membrane-spanning segment; sequence IKWFISVAFYILQAALMISLI. Residues 121-148 are Lumenal-facing; it reads WKYYSVPVAVVPSKWITPLDRLVAFPTR. A helical transmembrane segment spans residues 149–169; that stretch reads VAGGIGITCWILVCNKVVAIV. Residues 170-174 are Cytoplasmic-facing; it reads LHPFS.

It belongs to the WRB/GET1 family. In terms of assembly, component of the Golgi to ER traffic (GET) complex, which is composed of GET1, CAMLG/GET2 and GET3. Within the complex, GET1 and CAMLG form a heterotetramer which is stabilized by phosphatidylinositol binding and which binds to the GET3 homodimer. Interacts with CAMLG/GET2 (via C-terminus). GET3 shows a higher affinity for CAMLG than for GET1.

It localises to the endoplasmic reticulum membrane. Functionally, required for the post-translational delivery of tail-anchored (TA) proteins to the endoplasmic reticulum. Together with CAMLG/GET2, acts as a membrane receptor for soluble GET3/TRC40, which recognizes and selectively binds the transmembrane domain of TA proteins in the cytosol. Required to ensure correct topology and ER insertion of CAMLG. This is Guided entry of tail-anchored proteins factor 1 from Mus musculus (Mouse).